Here is a 333-residue protein sequence, read N- to C-terminus: NADH-quinone oxidoreductase subunit H (333 aa).

8 helical membrane passes run 17 to 37 (VIQA…MSFI), 91 to 111 (VAMA…TLGV), 116 to 136 (IGLL…LFGG), 156 to 176 (ISYE…AGSF), 188 to 208 (MWFI…GVAV), 244 to 264 (YVNI…GWLA), 272 to 292 (FIPP…MFVL), and 310 to 330 (WKVC…VILM).

The protein belongs to the complex I subunit 1 family. In terms of assembly, NDH-1 is composed of 14 different subunits. Subunits NuoA, H, J, K, L, M, N constitute the membrane sector of the complex.

It localises to the cell inner membrane. It catalyses the reaction a quinone + NADH + 5 H(+)(in) = a quinol + NAD(+) + 4 H(+)(out). NDH-1 shuttles electrons from NADH, via FMN and iron-sulfur (Fe-S) centers, to quinones in the respiratory chain. The immediate electron acceptor for the enzyme in this species is believed to be ubiquinone. Couples the redox reaction to proton translocation (for every two electrons transferred, four hydrogen ions are translocated across the cytoplasmic membrane), and thus conserves the redox energy in a proton gradient. This subunit may bind ubiquinone. The protein is NADH-quinone oxidoreductase subunit H of Acinetobacter baylyi (strain ATCC 33305 / BD413 / ADP1).